Here is a 113-residue protein sequence, read N- to C-terminus: uncharacterized protein (113 aa).

2 disordered regions span residues 1–22 (MGEH…PLAQ) and 90–113 (DGRH…SDDL). Over residues 90-99 (DGRHTTESSF) the composition is skewed to basic and acidic residues. A compositionally biased stretch (low complexity) spans 100-113 (EHSSPSRSPQSDDL).

This is an uncharacterized protein from Mycobacterium tuberculosis (strain ATCC 25618 / H37Rv).